The sequence spans 507 residues: ATP synthase subunit alpha, chloroplastic (507 aa).

170-177 (GDRQTGKT) serves as a coordination point for ATP. T257 carries the post-translational modification Phosphothreonine.

It belongs to the ATPase alpha/beta chains family. As to quaternary structure, F-type ATPases have 2 components, CF(1) - the catalytic core - and CF(0) - the membrane proton channel. CF(1) has five subunits: alpha(3), beta(3), gamma(1), delta(1), epsilon(1). CF(0) has four main subunits: a, b, b' and c.

It localises to the plastid. Its subcellular location is the chloroplast thylakoid membrane. It catalyses the reaction ATP + H2O + 4 H(+)(in) = ADP + phosphate + 5 H(+)(out). In terms of biological role, produces ATP from ADP in the presence of a proton gradient across the membrane. The alpha chain is a regulatory subunit. The polypeptide is ATP synthase subunit alpha, chloroplastic (Aethionema grandiflorum (Persian stone-cress)).